The sequence spans 165 residues: 3-isopropylmalate dehydratase small subunit (165 aa).

This sequence belongs to the LeuD family. LeuD type 2 subfamily. As to quaternary structure, heterodimer of LeuC and LeuD.

The enzyme catalyses (2R,3S)-3-isopropylmalate = (2S)-2-isopropylmalate. It participates in amino-acid biosynthesis; L-leucine biosynthesis; L-leucine from 3-methyl-2-oxobutanoate: step 2/4. In terms of biological role, catalyzes the isomerization between 2-isopropylmalate and 3-isopropylmalate, via the formation of 2-isopropylmaleate. The chain is 3-isopropylmalate dehydratase small subunit from Hydrogenobaculum sp. (strain Y04AAS1).